Consider the following 473-residue polypeptide: MSRLVVVSNRIAPPDNKGGAGGLAVGVLGALKAAGGLWFGWSGETGNEDEPLKKVTKGNITWASFNLSEQDYEDYYCQFSNAVLWPAFHYRLDLVQFQRPAWEGYMRVNALLADKLLPLIKENDIIWVHDYHLLPFASELRKRGVNNRIGFFLHIPFPTPEIFNALPPHDELLEQLCDFDLLGFQTENDRLAFLDSLSSQTRVTTRSGKQHIAWGKDFQTEVYPIGIEPDEIALQAAGPLPPKLAQLKAELKNVKNIFSVERLDYSKGLPERFLAYEALLENYPQHRGKIRYTQIAPTSRGEVQAYQDIRHQLETEAGRINGKYGQLGWTPLYYLNQHFDRKLLMKIFRYSDVGLVTPLRDGMNLVAKEFVAAQDPANPGVLVLSQFAGAANELTSALIVNPYDRDDVAAALNRALTMPLAERISRHAEMLDVIVKNDINRWQERFIHDLKEVTPRSPERQQQNNVATFPKLA.

A D-glucose 6-phosphate-binding site is contributed by arginine 10. 21-22 (GG) contacts UDP-alpha-D-glucose. Tyrosine 76 and aspartate 130 together coordinate D-glucose 6-phosphate. The UDP-alpha-D-glucose site is built by arginine 262 and lysine 267. Arginine 300 lines the D-glucose 6-phosphate pocket. Residues phenylalanine 339 and 365–369 (LVAKE) contribute to the UDP-alpha-D-glucose site. The segment at 454-473 (TPRSPERQQQNNVATFPKLA) is disordered.

It belongs to the glycosyltransferase 20 family. In terms of assembly, homotetramer.

The enzyme catalyses D-glucose 6-phosphate + UDP-alpha-D-glucose = alpha,alpha-trehalose 6-phosphate + UDP + H(+). It participates in glycan biosynthesis; trehalose biosynthesis. Its function is as follows. Probably involved in the osmoprotection via the biosynthesis of trehalose. Catalyzes the transfer of glucose from UDP-alpha-D-glucose (UDP-Glc) to D-glucose 6-phosphate (Glc-6-P) to form trehalose-6-phosphate. Acts with retention of the anomeric configuration of the UDP-sugar donor. This Salmonella paratyphi A (strain ATCC 9150 / SARB42) protein is Trehalose-6-phosphate synthase.